The sequence spans 214 residues: Phosphatidylserine decarboxylase proenzyme (214 aa).

Residue Ser-183 is the Schiff-base intermediate with substrate; via pyruvic acid of the active site. Ser-183 carries the pyruvic acid (Ser); by autocatalysis modification.

It belongs to the phosphatidylserine decarboxylase family. PSD-A subfamily. In terms of assembly, heterodimer of a large membrane-associated beta subunit and a small pyruvoyl-containing alpha subunit. Requires pyruvate as cofactor. Is synthesized initially as an inactive proenzyme. Formation of the active enzyme involves a self-maturation process in which the active site pyruvoyl group is generated from an internal serine residue via an autocatalytic post-translational modification. Two non-identical subunits are generated from the proenzyme in this reaction, and the pyruvate is formed at the N-terminus of the alpha chain, which is derived from the carboxyl end of the proenzyme. The post-translation cleavage follows an unusual pathway, termed non-hydrolytic serinolysis, in which the side chain hydroxyl group of the serine supplies its oxygen atom to form the C-terminus of the beta chain, while the remainder of the serine residue undergoes an oxidative deamination to produce ammonia and the pyruvoyl prosthetic group on the alpha chain.

Its subcellular location is the cell membrane. The catalysed reaction is a 1,2-diacyl-sn-glycero-3-phospho-L-serine + H(+) = a 1,2-diacyl-sn-glycero-3-phosphoethanolamine + CO2. Its pathway is phospholipid metabolism; phosphatidylethanolamine biosynthesis; phosphatidylethanolamine from CDP-diacylglycerol: step 2/2. Catalyzes the formation of phosphatidylethanolamine (PtdEtn) from phosphatidylserine (PtdSer). In Desulfotalea psychrophila (strain LSv54 / DSM 12343), this protein is Phosphatidylserine decarboxylase proenzyme.